A 760-amino-acid chain; its full sequence is Xaa-Pro dipeptidyl-peptidase (760 aa).

Catalysis depends on charge relay system residues S349, D469, and H499.

Belongs to the peptidase S15 family. As to quaternary structure, homodimer.

It localises to the cytoplasm. It carries out the reaction Hydrolyzes Xaa-Pro-|- bonds to release unblocked, N-terminal dipeptides from substrates including Ala-Pro-|-p-nitroanilide and (sequentially) Tyr-Pro-|-Phe-Pro-|-Gly-Pro-|-Ile.. Its function is as follows. Removes N-terminal dipeptides sequentially from polypeptides having unsubstituted N-termini provided that the penultimate residue is proline. This chain is Xaa-Pro dipeptidyl-peptidase, found in Streptococcus pyogenes serotype M4 (strain MGAS10750).